Consider the following 116-residue polypeptide: Tachykinin-3 (116 aa).

The signal sequence occupies residues 1–20; that stretch reads MRSAMLFAAVLALSLAWTFG. The propeptide occupies 21–79; sequence AVCEEPQGQGGRLSKDSDLYQLPPSLLRRLYDSRPVSLEGLLKVLSKASVGPKETSLPQ. A Methionine amide modification is found at Met-91. Residues 93-116 form a disordered region; sequence KRNSQPDTPTDVVEENTPSFGILK. A propeptide spanning residues 95 to 116 is cleaved from the precursor; it reads NSQPDTPTDVVEENTPSFGILK.

Belongs to the tachykinin family.

It is found in the secreted. Functionally, tachykinins are active peptides which excite neurons, evoke behavioral responses, are potent vasodilators and secretagogues, and contract (directly or indirectly) many smooth muscles. Is a critical central regulator of gonadal function. This chain is Tachykinin-3 (Tac3), found in Mus musculus (Mouse).